A 150-amino-acid polypeptide reads, in one-letter code: Large ribosomal subunit protein uL15 (150 aa).

A disordered region spans residues 1-52 (MITLNTLKDSTRKRKPRKRVGRGIGSKHGKTCGRGEKGAGARSGYKRRLGKE). A compositionally biased stretch (basic residues) spans 11–31 (TRKRKPRKRVGRGIGSKHGKT).

It belongs to the universal ribosomal protein uL15 family. In terms of assembly, part of the 50S ribosomal subunit.

Binds to the 23S rRNA. This chain is Large ribosomal subunit protein uL15, found in Protochlamydia amoebophila (strain UWE25).